Consider the following 113-residue polypeptide: Putative pterin-4-alpha-carbinolamine dehydratase (113 aa).

It belongs to the pterin-4-alpha-carbinolamine dehydratase family.

The enzyme catalyses (4aS,6R)-4a-hydroxy-L-erythro-5,6,7,8-tetrahydrobiopterin = (6R)-L-erythro-6,7-dihydrobiopterin + H2O. In Chlorobium limicola (strain DSM 245 / NBRC 103803 / 6330), this protein is Putative pterin-4-alpha-carbinolamine dehydratase.